A 215-amino-acid chain; its full sequence is Ras-related protein Rab-5A (215 aa).

Residues Ser-29, Ala-30, Gly-32, Lys-33, Ser-34, Ser-35, His-46, Glu-47, Thr-52, and Gly-78 each contribute to the GTP site. Mg(2+) is bound at residue Ser-34. 2 short sequence motifs (switch) span residues 44–56 and 77–93; these read QFHE…IGAA and AGQE…YRGA. Thr-52 provides a ligand contact to Mg(2+). Ser-84 carries the phosphoserine modification. GTP contacts are provided by Asn-133, Lys-134, Asp-136, Ala-164, and Lys-165. The disordered stretch occupies residues 185–215; the sequence is EPQNPGINCTRGRGVDLTEPTQPTRSQCCSN. A compositionally biased stretch (polar residues) spans 203 to 215; the sequence is EPTQPTRSQCCSN. S-geranylgeranyl cysteine attachment occurs at residues Cys-212 and Cys-213.

It belongs to the small GTPase superfamily. Rab family. As to quaternary structure, interacts with GDI1; this promotes dissociation from membranes; phosphorylation at Ser-84 disrupts this interaction. Interacts with GDI2; phosphorylation at Ser-84 disrupts the interaction. Interacts with SGSM1 and SGSM3. Interacts with PIK3CB. Interacts with RIN1 and GAPVD1, which regulate its pathway, probably by acting as a GEF. Interacts with RINL. Interacts with ALS2CL, SUN2, ZFYVE20 and RUFY1. Interacts with RABEP1; one RABEP1 homodimer binds two RAB5A chains, but at opposite sides of the dimer. Interacts with OCRL and INPP5F. May be a component of a complex composed of RAB5A, DYN2 and PIK3C3. Does not interact with the BLOC-3 complex (heterodimer of HPS1 and HPS4). Interacts with CLN5. Interacts with APPL2. Interacts with F8A1/F8A2/F8A3. Found in a complex with F8A1/F8A2/F8A3, HTT and RAB5A; mediates the recruitment of HTT by RAB5A onto early endosomes. Interacts with ATP9A. Interacts with PPP1R21; mediates the recruitment of FERRY complex by RAB5A onto early endosomes. Requires Mg(2+) as cofactor. Post-translationally, phosphorylation of Ser-84 in the switch II region by LRRK2 prevents the association of RAB regulatory proteins, including RAB GDP dissociation inhibitors GDI1 and GDI2.

It localises to the cell membrane. It is found in the early endosome membrane. Its subcellular location is the melanosome. The protein resides in the cytoplasmic vesicle. The protein localises to the cell projection. It localises to the ruffle. It is found in the membrane. Its subcellular location is the cytoplasm. The protein resides in the cytosol. The protein localises to the phagosome membrane. It localises to the endosome membrane. The enzyme catalyses GTP + H2O = GDP + phosphate + H(+). Regulated by guanine nucleotide exchange factors (GEFs) including RINL, which promote the exchange of bound GDP for free GTP. Regulated by GTPase activating proteins (GAPs) which increase the GTP hydrolysis activity. Inhibited by GDP dissociation inhibitors (GDIs). Its function is as follows. The small GTPases Rab are key regulators of intracellular membrane trafficking, from the formation of transport vesicles to their fusion with membranes. Rabs cycle between an inactive GDP-bound form and an active GTP-bound form that is able to recruit to membranes different sets of downstream effectors directly responsible for vesicle formation, movement, tethering and fusion. RAB5A is required for the fusion of plasma membranes and early endosomes. Contributes to the regulation of filopodia extension. Required for the exosomal release of SDCBP, CD63, PDCD6IP and syndecan. Regulates maturation of apoptotic cell-containing phagosomes, probably downstream of DYN2 and PIK3C3. The chain is Ras-related protein Rab-5A (RAB5A) from Sus scrofa (Pig).